The chain runs to 284 residues: Pantothenate synthetase (284 aa).

30-37 lines the ATP pocket; the sequence is MGNLHDGH. The active-site Proton donor is the His-37. Gln-61 contacts (R)-pantoate. Residue Gln-61 coordinates beta-alanine. 149–152 is an ATP binding site; that stretch reads GEKD. Gln-155 serves as a coordination point for (R)-pantoate. ATP contacts are provided by residues Val-178 and 186 to 189; that span reads LSSR.

It belongs to the pantothenate synthetase family. In terms of assembly, homodimer.

It is found in the cytoplasm. The catalysed reaction is (R)-pantoate + beta-alanine + ATP = (R)-pantothenate + AMP + diphosphate + H(+). The protein operates within cofactor biosynthesis; (R)-pantothenate biosynthesis; (R)-pantothenate from (R)-pantoate and beta-alanine: step 1/1. Its function is as follows. Catalyzes the condensation of pantoate with beta-alanine in an ATP-dependent reaction via a pantoyl-adenylate intermediate. This is Pantothenate synthetase from Klebsiella pneumoniae (strain 342).